Reading from the N-terminus, the 787-residue chain is Endonuclease MutS2 (787 aa).

334–341 (GPNTGGKT) contributes to the ATP binding site. Positions 712 to 787 (LDLRGKRYEE…GNGATIVTFK (76 aa)) constitute a Smr domain.

The protein belongs to the DNA mismatch repair MutS family. MutS2 subfamily. In terms of assembly, homodimer. Binds to stalled ribosomes, contacting rRNA.

Its function is as follows. Endonuclease that is involved in the suppression of homologous recombination and thus may have a key role in the control of bacterial genetic diversity. Functionally, acts as a ribosome collision sensor, splitting the ribosome into its 2 subunits. Detects stalled/collided 70S ribosomes which it binds and splits by an ATP-hydrolysis driven conformational change. Acts upstream of the ribosome quality control system (RQC), a ribosome-associated complex that mediates the extraction of incompletely synthesized nascent chains from stalled ribosomes and their subsequent degradation. Probably generates substrates for RQC. This Latilactobacillus sakei subsp. sakei (strain 23K) (Lactobacillus sakei subsp. sakei) protein is Endonuclease MutS2.